The following is a 335-amino-acid chain: Fructose-1,6-bisphosphatase class 1 (335 aa).

Glu-93, Asp-117, Leu-119, and Asp-120 together coordinate Mg(2+). Substrate is bound by residues 120-123 (DGSS), Asn-213, Tyr-244, and Lys-274. Glu-280 lines the Mg(2+) pocket.

It belongs to the FBPase class 1 family. In terms of assembly, homotetramer. The cofactor is Mg(2+).

It localises to the cytoplasm. The catalysed reaction is beta-D-fructose 1,6-bisphosphate + H2O = beta-D-fructose 6-phosphate + phosphate. It functions in the pathway carbohydrate biosynthesis; gluconeogenesis. The protein is Fructose-1,6-bisphosphatase class 1 of Flavobacterium psychrophilum (strain ATCC 49511 / DSM 21280 / CIP 103535 / JIP02/86).